Consider the following 115-residue polypeptide: MRANRVGEQMKKELGDIISRKLKDPRIGFLTVTDVRVSGDLQIAKVYISVLGGEKKKEEALKGLEKAKGFIRSEIGSRIRLRKTPELEFEFDESIEYGNRIETLIHELHSDKPSE.

This sequence belongs to the RbfA family. As to quaternary structure, monomer. Binds 30S ribosomal subunits, but not 50S ribosomal subunits or 70S ribosomes.

Its subcellular location is the cytoplasm. Functionally, one of several proteins that assist in the late maturation steps of the functional core of the 30S ribosomal subunit. Associates with free 30S ribosomal subunits (but not with 30S subunits that are part of 70S ribosomes or polysomes). Required for efficient processing of 16S rRNA. May interact with the 5'-terminal helix region of 16S rRNA. The polypeptide is Ribosome-binding factor A (Bacillus velezensis (strain DSM 23117 / BGSC 10A6 / LMG 26770 / FZB42) (Bacillus amyloliquefaciens subsp. plantarum)).